The primary structure comprises 426 residues: NADH-quinone oxidoreductase subunit D 1 (426 aa).

The segment at 1–51 is disordered; that stretch reads MATEFTVPDSAARIATAQQAGGGTPVRSGPPDEGGEFSGDRMSLSMGPSHP.

This sequence belongs to the complex I 49 kDa subunit family. NDH-1 is composed of 14 different subunits. Subunits NuoB, C, D, E, F, and G constitute the peripheral sector of the complex.

The protein resides in the cell inner membrane. It carries out the reaction a quinone + NADH + 5 H(+)(in) = a quinol + NAD(+) + 4 H(+)(out). NDH-1 shuttles electrons from NADH, via FMN and iron-sulfur (Fe-S) centers, to quinones in the respiratory chain. The immediate electron acceptor for the enzyme in this species is believed to be ubiquinone. Couples the redox reaction to proton translocation (for every two electrons transferred, four hydrogen ions are translocated across the cytoplasmic membrane), and thus conserves the redox energy in a proton gradient. This chain is NADH-quinone oxidoreductase subunit D 1, found in Opitutus terrae (strain DSM 11246 / JCM 15787 / PB90-1).